The following is a 314-amino-acid chain: Ribosomal protein uL3 glutamine methyltransferase (314 aa).

This sequence belongs to the protein N5-glutamine methyltransferase family. PrmB subfamily.

It catalyses the reaction L-glutaminyl-[ribosomal protein uL3] + S-adenosyl-L-methionine = N(5)-methyl-L-glutaminyl-[ribosomal protein uL3] + S-adenosyl-L-homocysteine + H(+). Functionally, methylates large ribosomal subunit protein uL3 on a specific glutamine residue. This is Ribosomal protein uL3 glutamine methyltransferase from Shewanella oneidensis (strain ATCC 700550 / JCM 31522 / CIP 106686 / LMG 19005 / NCIMB 14063 / MR-1).